We begin with the raw amino-acid sequence, 598 residues long: Membrane protein insertase YidC (598 aa).

Residues Asn7–Met27 traverse the membrane as a helical segment. Residues Ala37–Ala76 form a disordered region. Over residues Ala40–Ala76 the composition is skewed to low complexity. The next 4 membrane-spanning stretches (helical) occupy residues Phe377 to Ser397, Trp447 to Ile467, Leu492 to Ile512, and Trp538 to Trp558.

Belongs to the OXA1/ALB3/YidC family. Type 1 subfamily. In terms of assembly, interacts with the Sec translocase complex via SecD. Specifically interacts with transmembrane segments of nascent integral membrane proteins during membrane integration.

It localises to the cell inner membrane. In terms of biological role, required for the insertion and/or proper folding and/or complex formation of integral membrane proteins into the membrane. Involved in integration of membrane proteins that insert both dependently and independently of the Sec translocase complex, as well as at least some lipoproteins. Aids folding of multispanning membrane proteins. This is Membrane protein insertase YidC from Rhizobium johnstonii (strain DSM 114642 / LMG 32736 / 3841) (Rhizobium leguminosarum bv. viciae).